Consider the following 287-residue polypeptide: Protein HEXIM2 (287 aa).

Disordered stretches follow at residues 1-212 (MKDW…RSKE) and 266-287 (RLRQENEMWNREGGRRGGQPGS). Position 31 is a phosphoserine (Ser31). A phosphothreonine mark is found at Thr34 and Thr48. Residues Ser53, Ser55, Ser73, Ser78, and Ser83 each carry the phosphoserine modification. Over residues 89-105 (ARKKHRRRPSKRKRHWR) the composition is skewed to basic residues. Residues 115–134 (KQQRDERQSQRASRVREEMF) show a composition bias toward basic and acidic residues. The tract at residues 142–145 (PYNT) is interaction with P-TEFb. Composition is skewed to basic and acidic residues over residues 181–212 (GQGRARGEFQQKDFSEAYERYHTESLQGRSKE) and 266–280 (RLRQENEMWNREGGR). Residues 208–278 (GRSKEELVRD…QENEMWNREG (71 aa)) adopt a coiled-coil conformation. The segment at 227 to 287 (QAEEEMRRLR…GGRRGGQPGS (61 aa)) is interaction with CCNT1, HEXIM1 and HEXIM2.

Belongs to the HEXIM family. In terms of assembly, homooligomer and heterooligomer with HEXIM1; probably dimeric. Core component of the 7SK RNP complex, at least composed of 7SK RNA, LARP7, MEPCE, HEXIM1 (or HEXIM2) and P-TEFb (composed of CDK9 and CCNT1/cyclin-T1). Interacts with CCNT2.

The protein localises to the nucleus. Transcriptional regulator which functions as a general RNA polymerase II transcription inhibitor. Core component of the 7SK RNP complex: in cooperation with 7SK snRNA sequesters P-TEFb in a large inactive 7SK snRNP complex preventing RNA polymerase II phosphorylation and subsequent transcriptional elongation. The sequence is that of Protein HEXIM2 (HEXIM2) from Bos taurus (Bovine).